We begin with the raw amino-acid sequence, 465 residues long: Hydroxyacid-oxoacid transhydrogenase, mitochondrial (465 aa).

This sequence belongs to the iron-containing alcohol dehydrogenase family. Hydroxyacid-oxoacid transhydrogenase subfamily.

The protein localises to the mitochondrion. It carries out the reaction (S)-3-hydroxybutanoate + 2-oxoglutarate = (R)-2-hydroxyglutarate + acetoacetate. It catalyses the reaction 4-hydroxybutanoate + 2-oxoglutarate = (R)-2-hydroxyglutarate + succinate semialdehyde. Its function is as follows. Catalyzes the cofactor-independent reversible oxidation of gamma-hydroxybutyrate (GHB) to succinic semialdehyde (SSA) coupled to reduction of 2-ketoglutarate (2-KG) to D-2-hydroxyglutarate (D-2-HG). L-3-hydroxybutyrate (L-3-OHB) is also a substrate for HOT when using 2-KG as hydrogen acceptor, resulting in the formation of D-2-HG. In Caenorhabditis elegans, this protein is Hydroxyacid-oxoacid transhydrogenase, mitochondrial.